The following is a 417-amino-acid chain: UPF0761 membrane protein CV_0810 (417 aa).

Helical transmembrane passes span 52–72 (LLAL…FPVF), 79–99 (FKIM…ITVY), 110–130 (LTAA…STIE), 150–170 (MVYW…LLSW), 185–205 (LLAS…VLAL), 214–234 (FVPF…LELT), and 258–278 (IPIF…GAVF).

Belongs to the UPF0761 family.

The protein localises to the cell inner membrane. The chain is UPF0761 membrane protein CV_0810 from Chromobacterium violaceum (strain ATCC 12472 / DSM 30191 / JCM 1249 / CCUG 213 / NBRC 12614 / NCIMB 9131 / NCTC 9757 / MK).